Reading from the N-terminus, the 277-residue chain is Putative phosphoenolpyruvate synthase regulatory protein (277 aa).

ADP is bound at residue 157 to 164; that stretch reads GVSRCGKT.

This sequence belongs to the pyruvate, phosphate/water dikinase regulatory protein family. PSRP subfamily.

It carries out the reaction [pyruvate, water dikinase] + ADP = [pyruvate, water dikinase]-phosphate + AMP + H(+). It catalyses the reaction [pyruvate, water dikinase]-phosphate + phosphate + H(+) = [pyruvate, water dikinase] + diphosphate. In terms of biological role, bifunctional serine/threonine kinase and phosphorylase involved in the regulation of the phosphoenolpyruvate synthase (PEPS) by catalyzing its phosphorylation/dephosphorylation. This chain is Putative phosphoenolpyruvate synthase regulatory protein, found in Enterobacter sp. (strain 638).